Reading from the N-terminus, the 574-residue chain is Acyloxyacyl hydrolase (574 aa).

The N-terminal stretch at 1-22 is a signal peptide; it reads MKFPWKVFKTTLLLLLLSHSLA. A propeptide spanning residues 23-33 is cleaved from the precursor; that stretch reads SVPSEDQPGDS. One can recognise a Saposin B-type domain in the interval 36 to 117; that stretch reads HGQSCLGCVV…YALEFCKRGA (82 aa). The segment at 37-69 is important for enzyme activity, localization to cytoplasmic vesicles, and protein stability; it reads GQSCLGCVVLVSVIEQLAEVHNSSVQVAMERLC. 8 cysteine pairs are disulfide-bonded: cysteine 40–cysteine 113, cysteine 43–cysteine 107, cysteine 69–cysteine 82, cysteine 122–cysteine 452, cysteine 159–cysteine 168, cysteine 205–cysteine 229, cysteine 248–cysteine 328, and cysteine 375–cysteine 458. Asparagine 58 is a glycosylation site (N-linked (GlcNAc...) asparagine). The interval 172–176 is lipopolysaccharide binding; the sequence is ELSIK. 15 residues coordinate Ca(2+): aspartate 183, aspartate 185, aspartate 187, histidine 189, aspartate 204, asparagine 206, aspartate 207, aspartate 209, valine 212, aspartate 222, aspartate 226, asparagine 228, asparagine 230, isoleucine 232, and glutamate 244. Asparagine 206 carries an N-linked (GlcNAc...) asparagine glycan. Residue serine 262 is part of the active site. Residues asparagine 408 and asparagine 465 are each glycosylated (N-linked (GlcNAc...) asparagine).

As to quaternary structure, heterodimer of the large and small subunits; disulfide-linked. Ca(2+) serves as cofactor. In terms of processing, cleaved into a large and a small subunit. The small subunit is N-glycosylated. As to expression, detected in peritoneal macrophages (at protein level). Strongly expressed in kidney cortex, where it may be produced by proximal tubule cells. In liver, expressed at high levels in Kupffer cells. Expressed by dendritic cells. Detected at low levels in alveolar macrophages.

The protein localises to the secreted. It localises to the cytoplasmic vesicle. It catalyses the reaction a 3-(acyloxy)acyl derivative of bacterial toxin + H2O = a 3-hydroxyacyl derivative of bacterial toxin + a fatty acid + H(+). Functionally, removes the secondary (acyloxyacyl-linked) fatty acyl chains from the lipid A region of bacterial lipopolysaccharides (LPS). By breaking down LPS, terminates the host response to bacterial infection and prevents prolonged and damaging inflammatory responses. In peritoneal macrophages, seems to be important for recovery from a state of immune tolerance following infection by Gram-negative bacteria. In Mus musculus (Mouse), this protein is Acyloxyacyl hydrolase.